A 204-amino-acid polypeptide reads, in one-letter code: Elongation factor Ts (204 aa).

An involved in Mg(2+) ion dislocation from EF-Tu region spans residues 80-83 (TDFV).

The protein belongs to the EF-Ts family.

It is found in the cytoplasm. Functionally, associates with the EF-Tu.GDP complex and induces the exchange of GDP to GTP. It remains bound to the aminoacyl-tRNA.EF-Tu.GTP complex up to the GTP hydrolysis stage on the ribosome. The chain is Elongation factor Ts from Caldicellulosiruptor bescii (strain ATCC BAA-1888 / DSM 6725 / KCTC 15123 / Z-1320) (Anaerocellum thermophilum).